The sequence spans 416 residues: MSTPLQGIKVLDFTGVQSGPSCTQMLAWFGADVIKIERPGVGDVTRHQLRDIPDIDALYFTMLNSNKRSIELNTKTAEGKEVMEKLIREADILVENFHPGAIDHMGFTWEHIQEINPRLIFGSIKGFDECSPYVNVKAYENVAQAAGGAASTTGFWDGPPLVSAAALGDSNTGMHLLIGLLAALLHREKTGRGQRVTMSMQDAVLNLCRVKLRDQQRLDKLGYLEEYPQYPNGTFGDAVPRGGNAGGGGQPGWILKCKGWETDPNAYIYFTIQEQNWENTCKAIGKPEWITDPAYSTAHARQPHIFDIFAEIEKYTVTIDKHEAVAYLTQFDIPCAPVLSMKEISLDPSLRQSGSVVEVEQPLRGKYLTVGCPMKFSAFTPDIKAAPLLGEHTAVVLQELGYSDDEIAAMKQNHAI.

Residues 17–18 (QS), arginine 38, 72–75 (LNTK), 96–98 (NFH), histidine 104, and 137–140 (KAYE) each bind CoA. Aspartate 169 serves as the catalytic Nucleophile. Residue 248 to 250 (GGQ) participates in substrate binding. 273-275 (QEQ) contacts CoA.

It belongs to the CoA-transferase III family. Frc subfamily. As to quaternary structure, homodimer.

It carries out the reaction formyl-CoA + oxalate = oxalyl-CoA + formate. Its pathway is metabolic intermediate degradation; oxalate degradation; CO(2) and formate from oxalate: step 1/2. In terms of biological role, involved in the catabolism of oxalate and in the adapatation to low pH via the induction of the oxalate-dependent acid tolerance response (ATR). Catalyzes the transfer of the CoA moiety from formyl-CoA to oxalate. The polypeptide is Formyl-CoA:oxalate CoA-transferase (Shigella boydii serotype 18 (strain CDC 3083-94 / BS512)).